Here is a 480-residue protein sequence, read N- to C-terminus: RuvB-like helicase 2 (480 aa).

Residue G73–T80 coordinates ATP.

It belongs to the RuvB family. In terms of assembly, forms homohexameric rings. May form a dodecamer with rept made of two stacked hexameric rings. Component of the chromatin remodeling Ino80 complex.

The protein resides in the nucleus. The catalysed reaction is ATP + H2O = ADP + phosphate + H(+). Functionally, acts as a transcriptional coactivator in Wg signaling caused by altered arm signaling. Pont and rept interfere antagonistically with nuclear arm signaling function, and are required to enhance or reduce arm activity, respectively. Also an essential cofactor for the normal function of Myc; required for cellular proliferation and growth. Its function is as follows. Proposed core component of the chromatin remodeling Ino80 complex which is involved in transcriptional regulation, DNA replication and probably DNA repair. This chain is RuvB-like helicase 2, found in Drosophila pseudoobscura pseudoobscura (Fruit fly).